The chain runs to 195 residues: SPbeta prophage-derived uncharacterized protein YotM (195 aa).

The polypeptide is SPbeta prophage-derived uncharacterized protein YotM (yotM) (Bacillus subtilis (strain 168)).